Consider the following 302-residue polypeptide: Sulfate adenylyltransferase subunit 2 (302 aa).

Belongs to the PAPS reductase family. CysD subfamily. Heterodimer composed of CysD, the smaller subunit, and CysN.

The enzyme catalyses sulfate + ATP + H(+) = adenosine 5'-phosphosulfate + diphosphate. Its pathway is sulfur metabolism; hydrogen sulfide biosynthesis; sulfite from sulfate: step 1/3. In terms of biological role, with CysN forms the ATP sulfurylase (ATPS) that catalyzes the adenylation of sulfate producing adenosine 5'-phosphosulfate (APS) and diphosphate, the first enzymatic step in sulfur assimilation pathway. APS synthesis involves the formation of a high-energy phosphoric-sulfuric acid anhydride bond driven by GTP hydrolysis by CysN coupled to ATP hydrolysis by CysD. The polypeptide is Sulfate adenylyltransferase subunit 2 (Serratia proteamaculans (strain 568)).